The sequence spans 151 residues: Flagellar assembly factor FliW (151 aa).

It belongs to the FliW family. As to quaternary structure, interacts with translational regulator CsrA and flagellin(s).

Its subcellular location is the cytoplasm. Its function is as follows. Acts as an anti-CsrA protein, binds CsrA and prevents it from repressing translation of its target genes, one of which is flagellin. Binds to flagellin and participates in the assembly of the flagellum. The chain is Flagellar assembly factor FliW from Lachnospira eligens (strain ATCC 27750 / DSM 3376 / VPI C15-48 / C15-B4) (Eubacterium eligens).